The sequence spans 203 residues: NADH dehydrogenase [ubiquinone] 1 alpha subcomplex assembly factor 4 (203 aa).

It belongs to the NDUFAF4 family. Together with NdufAF3 associates with mitochondrial complex I assembly intermediates during its biogenesis.

In terms of biological role, involved in the assembly of mitochondrial NADH:ubiquinone oxidoreductase complex (complex I). Together with NdufAF3, involved in biogenesis of complex 1 modules N, Q and P-peripheral, but not the P-distal module. Required for recruitment of the complex I assembly factor Timmdc1 to complex 1 assembly intermediates. The polypeptide is NADH dehydrogenase [ubiquinone] 1 alpha subcomplex assembly factor 4 (Drosophila melanogaster (Fruit fly)).